The chain runs to 200 residues: Cysteine-rich venom protein VAR8 (200 aa).

The first 22 residues, 1-22 (MILLKLYLTLAAILCQSRGTTS), serve as a signal peptide directing secretion. Residues 41–169 (NKHNDLRRTV…PLKYFLVCQY (129 aa)) form the SCP domain. Intrachain disulfides connect Cys-77/Cys-156, Cys-95/Cys-170, Cys-151/Cys-167, and Cys-189/Cys-196.

This sequence belongs to the CRISP family. Contains 8 disulfide bonds. In terms of tissue distribution, expressed by the venom gland.

The protein resides in the secreted. Its function is as follows. Blocks ryanodine receptors, and potassium channels. The sequence is that of Cysteine-rich venom protein VAR8 from Varanus acanthurus (Ridge-tailed monitor).